A 322-amino-acid polypeptide reads, in one-letter code: Ribose 1,5-bisphosphate isomerase (322 aa).

Substrate-binding positions include 20-23 and Arg63; that span reads RGAG. Cys133 functions as the Proton acceptor in the catalytic mechanism. Residue 135–137 coordinates substrate; the sequence is SKA. The active-site Proton donor is Asp202. Substrate contacts are provided by residues 212–213 and Lys238; that span reads NK.

It belongs to the eIF-2B alpha/beta/delta subunits family. R15P isomerase subfamily. As to quaternary structure, homohexamer; trimer of dimers.

The catalysed reaction is alpha-D-ribose 1,5-bisphosphate = D-ribulose 1,5-bisphosphate. Is highly activated in the presence of AMP, with an increase of &gt;40-fold in activity levels. Among other nucleotides, isomerase activity is slightly increased in the presence of GMP, but CMP, UMP, TMP, and NAD(+) have no effect; therefore, AMP is likely the major activator of R15P isomerase in vivo. To a lesser extent, various compounds with an adenosyl moiety, such as dAMP, adenosine, or methylthioadenosine, can also act as activators. The regulation of this enzyme by AMP prevents excess degradation of intracellular AMP by the archaeal AMP degradation pathway. In terms of biological role, catalyzes the isomerization of ribose 1,5-bisphosphate (R15P) to ribulose 1,5-bisphosphate (RuBP), the CO(2) acceptor and substrate for RubisCO. Only accepts the alpha-anomer of D-ribose 1,5-bisphosphate as substrate, being inactive on the beta-anomer. Displays a strict substrate specificity, since other phosphorylated sugars such as R5P, ribose, G16P, G6P, G1P, FBP, F6P, and PRPP, are not substrates. Functions in an archaeal AMP degradation pathway, together with AMP phosphorylase and RubisCO. The polypeptide is Ribose 1,5-bisphosphate isomerase (Thermococcus kodakarensis (strain ATCC BAA-918 / JCM 12380 / KOD1) (Pyrococcus kodakaraensis (strain KOD1))).